A 160-amino-acid polypeptide reads, in one-letter code: Ribosomal RNA large subunit methyltransferase H (160 aa).

The S-adenosyl-L-methionine site is built by L76 and G108.

It belongs to the RNA methyltransferase RlmH family. In terms of assembly, homodimer.

It is found in the cytoplasm. The catalysed reaction is pseudouridine(1915) in 23S rRNA + S-adenosyl-L-methionine = N(3)-methylpseudouridine(1915) in 23S rRNA + S-adenosyl-L-homocysteine + H(+). Its function is as follows. Specifically methylates the pseudouridine at position 1915 (m3Psi1915) in 23S rRNA. The sequence is that of Ribosomal RNA large subunit methyltransferase H from Rhodopseudomonas palustris (strain BisB18).